The chain runs to 525 residues: GMP synthase [glutamine-hydrolyzing] (525 aa).

Positions 9 to 207 constitute a Glutamine amidotransferase type-1 domain; that stretch reads RILILDFGSQ…VLTISGCEAL (199 aa). Residue C86 is the Nucleophile of the active site. Catalysis depends on residues H181 and E183. The region spanning 208-400 is the GMPS ATP-PPase domain; sequence WTPAKIVDDA…LGLPYDMVYR (193 aa). 235 to 241 is an ATP binding site; sequence SGGVDSS.

Homodimer.

It catalyses the reaction XMP + L-glutamine + ATP + H2O = GMP + L-glutamate + AMP + diphosphate + 2 H(+). Its pathway is purine metabolism; GMP biosynthesis; GMP from XMP (L-Gln route): step 1/1. Functionally, catalyzes the synthesis of GMP from XMP. This chain is GMP synthase [glutamine-hydrolyzing], found in Marinobacter nauticus (strain ATCC 700491 / DSM 11845 / VT8) (Marinobacter aquaeolei).